Consider the following 296-residue polypeptide: Cytochrome bc1 complex cytochrome c subunit (296 aa).

Over residues 1 to 19 (MMETNPQTSEGAGKAQSSA) the composition is skewed to polar residues. A disordered region spans residues 1 to 27 (MMETNPQTSEGAGKAQSSAKKVKNRRK). A helical membrane pass occupies residues 32 to 52 (VAGAMALTIGLSGAGILATAI). Cytochrome c domains follow at residues 67 to 147 (ALIA…AANG) and 177 to 255 (LDVS…KSTK). Positions 80, 83, 84, 190, 193, and 194 each coordinate heme c. Residues 274–294 (GLFMWGIGIMVLIAAAMWIGS) traverse the membrane as a helical segment.

The cytochrome bc1 complex is composed of a cytochrome b (QcrB), the Rieske iron-sulfur protein (QcrA) and a diheme cytochrome c (QcrC) subunit. The bc1 complex forms a supercomplex with cytochrome c oxidase (cytochrome aa3). In terms of processing, binds 2 heme c groups covalently per subunit.

The protein resides in the cell membrane. It catalyses the reaction a quinol + 2 Fe(III)-[cytochrome c](out) = a quinone + 2 Fe(II)-[cytochrome c](out) + 2 H(+)(out). In terms of biological role, cytochrome c1 subunit of the cytochrome bc1 complex, an essential component of the respiratory electron transport chain required for ATP synthesis. The bc1 complex catalyzes the oxidation of menaquinol and the reduction of cytochrome c in the respiratory chain. The bc1 complex operates through a Q-cycle mechanism that couples electron transfer to generation of the proton gradient that drives ATP synthesis. This Corynebacterium efficiens (strain DSM 44549 / YS-314 / AJ 12310 / JCM 11189 / NBRC 100395) protein is Cytochrome bc1 complex cytochrome c subunit (qcrC).